Reading from the N-terminus, the 179-residue chain is Large ribosomal subunit protein uL6 (179 aa).

The protein belongs to the universal ribosomal protein uL6 family. In terms of assembly, part of the 50S ribosomal subunit.

Its function is as follows. This protein binds to the 23S rRNA, and is important in its secondary structure. It is located near the subunit interface in the base of the L7/L12 stalk, and near the tRNA binding site of the peptidyltransferase center. The polypeptide is Large ribosomal subunit protein uL6 (Kineococcus radiotolerans (strain ATCC BAA-149 / DSM 14245 / SRS30216)).